Consider the following 377-residue polypeptide: Nitric oxide reductase FlRd-NAD(+) reductase (377 aa).

This sequence belongs to the FAD-dependent oxidoreductase family. Requires FAD as cofactor.

It localises to the cytoplasm. It carries out the reaction 2 reduced [nitric oxide reductase rubredoxin domain] + NAD(+) + H(+) = 2 oxidized [nitric oxide reductase rubredoxin domain] + NADH. It functions in the pathway nitrogen metabolism; nitric oxide reduction. One of at least two accessory proteins for anaerobic nitric oxide (NO) reductase. Reduces the rubredoxin moiety of NO reductase. This Escherichia coli O9:H4 (strain HS) protein is Nitric oxide reductase FlRd-NAD(+) reductase.